The primary structure comprises 287 residues: ATP synthase gamma chain (287 aa).

This sequence belongs to the ATPase gamma chain family. In terms of assembly, F-type ATPases have 2 components, CF(1) - the catalytic core - and CF(0) - the membrane proton channel. CF(1) has five subunits: alpha(3), beta(3), gamma(1), delta(1), epsilon(1). CF(0) has three main subunits: a, b and c.

The protein localises to the cell inner membrane. Functionally, produces ATP from ADP in the presence of a proton gradient across the membrane. The gamma chain is believed to be important in regulating ATPase activity and the flow of protons through the CF(0) complex. The polypeptide is ATP synthase gamma chain (Salmonella agona (strain SL483)).